The sequence spans 429 residues: Enolase (429 aa).

Gln167 contributes to the (2R)-2-phosphoglycerate binding site. Glu209 serves as the catalytic Proton donor. Residues Asp246, Glu289, and Asp316 each coordinate Mg(2+). Residues Lys341, Arg370, Ser371, and Lys392 each contribute to the (2R)-2-phosphoglycerate site. Residue Lys341 is the Proton acceptor of the active site.

This sequence belongs to the enolase family. Component of the RNA degradosome, a multiprotein complex involved in RNA processing and mRNA degradation. The cofactor is Mg(2+).

The protein localises to the cytoplasm. It is found in the secreted. Its subcellular location is the cell surface. The enzyme catalyses (2R)-2-phosphoglycerate = phosphoenolpyruvate + H2O. It functions in the pathway carbohydrate degradation; glycolysis; pyruvate from D-glyceraldehyde 3-phosphate: step 4/5. In terms of biological role, catalyzes the reversible conversion of 2-phosphoglycerate (2-PG) into phosphoenolpyruvate (PEP). It is essential for the degradation of carbohydrates via glycolysis. The polypeptide is Enolase (Pseudomonas fluorescens (strain ATCC BAA-477 / NRRL B-23932 / Pf-5)).